The primary structure comprises 189 residues: MTIKSDRWISRMAAEKGMIEPFQPGQVRADENGEKLISYGVSSYGYDVRCADEFKVFTNIHSATVDPKAFDERSFVDVKGEYCIIPPNSFALARTVEYFRIPRNVLTICLGKSTYARCGIIVNVTPLEPEWEGHVTLEFSNTTTLPAKIYAHEGVAQMLFFESDEVCETSYMDRGGKYQGQRGVTLPRA.

DCTP contacts are provided by residues 112–117 (KSTYAR), 136–138 (TLE), Gln157, Tyr171, and Gln181. The Proton donor/acceptor role is filled by Glu138.

The protein belongs to the dCTP deaminase family. In terms of assembly, homotrimer.

The enzyme catalyses dCTP + H2O + H(+) = dUTP + NH4(+). It functions in the pathway pyrimidine metabolism; dUMP biosynthesis; dUMP from dCTP (dUTP route): step 1/2. Catalyzes the deamination of dCTP to dUTP. In Alcanivorax borkumensis (strain ATCC 700651 / DSM 11573 / NCIMB 13689 / SK2), this protein is dCTP deaminase.